The following is a 207-amino-acid chain: Large ribosomal subunit protein uL4 (207 aa).

Residues 47-78 (GTAKTKTRAEVRGGGKKPWRQKGTGRARQGSI) form a disordered region. Residues 60–71 (GGKKPWRQKGTG) show a composition bias toward basic residues.

It belongs to the universal ribosomal protein uL4 family. In terms of assembly, part of the 50S ribosomal subunit.

Functionally, one of the primary rRNA binding proteins, this protein initially binds near the 5'-end of the 23S rRNA. It is important during the early stages of 50S assembly. It makes multiple contacts with different domains of the 23S rRNA in the assembled 50S subunit and ribosome. In terms of biological role, forms part of the polypeptide exit tunnel. This Acholeplasma laidlawii (strain PG-8A) protein is Large ribosomal subunit protein uL4.